The following is a 164-amino-acid chain: MERFLENAMYASRWLLAPVYFGLSLALVALALKFFQEIIHVLPNIFSMAESDLILVLLSLVDMTLVGGLLVMVMFSGYENFVSQLDISENKEKLNWLGKMDATSLKNKVAASIVAISSIHLLRVFMDAKNVPDNKLMWYVIIHLTFVLSAFVMGYLDRLTRHNH.

The next 3 membrane-spanning stretches (helical) occupy residues 15–35 (LLAPVYFGLSLALVALALKFF), 53–73 (LILVLLSLVDMTLVGGLLVMV), and 136–156 (LMWYVIIHLTFVLSAFVMGYL).

The protein belongs to the UPF0114 family.

It localises to the cell membrane. This Escherichia coli O139:H28 (strain E24377A / ETEC) protein is UPF0114 protein YqhA.